Here is a 251-residue protein sequence, read N- to C-terminus: uncharacterized protein (251 aa).

This sequence belongs to the FAM243 family.

This is an uncharacterized protein from Homo sapiens (Human).